A 902-amino-acid chain; its full sequence is Glutamate receptor 4 (902 aa).

The N-terminal stretch at 1-20 is a signal peptide; that stretch reads MRIICRQIVLLFSGFWGLAM. Topologically, residues 22-544 are extracellular; that stretch reads AFPSSVQIGG…GVFSFLDPLA (523 aa). N-linked (GlcNAc...) asparagine glycosylation is found at N52, N56, N258, N371, N407, and N414. A disulfide bridge links C84 with C331. 3 residues coordinate L-glutamate: P500, T502, and R507. Residues 545–565 traverse the membrane as a helical segment; it reads YEIWMCIVFAYIGVSVVLFLV. The Cytoplasmic segment spans residues 566 to 592; sequence SRFSPYEWHTEEPEDGKEGPSDQPPNE. The segment at residues 593-608 is an intramembrane region (helical; Pore-forming); it reads FGIFNSLWFSLGAFMQ. Residues 609 to 611 lie within the membrane without spanning it; the sequence is QGC. The S-palmitoyl cysteine moiety is linked to residue C611. At 612 to 617 the chain is on the cytoplasmic side; that stretch reads DISPRS. Residues 618 to 638 traverse the membrane as a helical segment; it reads LSGRIVGGVWWFFTLIIISSY. Residues 639-813 are Extracellular-facing; the sequence is TANLAAFLTV…DKTSALSLSN (175 aa). L-glutamate-binding residues include S676, T677, and E727. A disulfide bond links C740 and C795. Residues 814–834 form a helical membrane-spanning segment; the sequence is VAGVFYILVGGLGLAMLVALI. At 835-902 the chain is on the cytoplasmic side; the sequence is EFCYKSRAEA…GLAVIASDLP (68 aa). Residue C837 is the site of S-palmitoyl cysteine attachment. A Phosphoserine modification is found at S862.

It belongs to the glutamate-gated ion channel (TC 1.A.10.1) family. GRIA4 subfamily. As to quaternary structure, homotetramer or heterotetramer of pore-forming glutamate receptor subunits. Tetramers may be formed by the dimerization of dimers. Interacts with EPB41L1 via its C-terminus. Isoform 3 interacts with PICK1. Found in a complex with GRIA1, GRIA2, GRIA3, CNIH2, CNIH3, CACNG2, CACNG3, CACNG4, CACNG5, CACNG7 and CACNG8. Interacts with CACNG5 and PRKCG. Found in a complex with GRIA1, GRIA2, GRIA3, DLG4, CACNG8 and CNIH2. Post-translationally, palmitoylated. Depalmitoylated upon L-glutamate stimulation. ZDHHC3/GODZ specifically palmitoylates Cys-611, which leads to Golgi retention and decreased cell surface expression. In contrast, Cys-837 palmitoylation does not affect cell surface expression but regulates stimulation-dependent endocytosis. In terms of processing, phosphorylated at Ser-862 by PRKCG; phosphorylation increases plasma membrane-associated GRI4 expression.

The protein resides in the cell membrane. The protein localises to the postsynaptic cell membrane. It localises to the cell projection. It is found in the dendrite. It catalyses the reaction Ca(2+)(in) = Ca(2+)(out). The catalysed reaction is Na(+)(in) = Na(+)(out). The enzyme catalyses Mg(2+)(in) = Mg(2+)(out). Its function is as follows. Ionotropic glutamate receptor that functions as a ligand-gated cation channel, gated by L-glutamate and glutamatergic agonists such as alpha-amino-3-hydroxy-5-methyl-4-isoxazolepropionic acid (AMPA), quisqualic acid, and kainic acid. L-glutamate acts as an excitatory neurotransmitter at many synapses in the central nervous system and plays an important role in fast excitatory synaptic transmission. Binding of the excitatory neurotransmitter L-glutamate induces a conformation change, leading to the opening of the cation channel, and thereby converts the chemical signal to an electrical impulse upon entry of monovalent and divalent cations such as sodium and calcium. The receptor then desensitizes rapidly and enters a transient inactive state, characterized by the presence of bound agonist. In the presence of CACNG8, shows resensitization which is characterized by a delayed accumulation of current flux upon continued application of L-glutamate. In Mus musculus (Mouse), this protein is Glutamate receptor 4.